Reading from the N-terminus, the 131-residue chain is ER membrane protein complex subunit 5 (131 aa).

At 1-3 (MAP) the chain is on the cytoplasmic side. Residues 4–22 (SLWKGLVGVGLFALAHAAF) form a helical membrane-spanning segment. The Lumenal segment spans residues 23-43 (SAAQHRSYMRLTEKEDESLPI). The chain crosses the membrane as a helical span at residues 44–63 (DIVLQTLLAFAVTCYGIVHI). Residues 64–131 (AGEFKDMDAT…KLRKFDSLRR (68 aa)) are Cytoplasmic-facing. Position 120 is a phosphoserine (S120).

It belongs to the membrane magnesium transporter (TC 1.A.67) family. In terms of assembly, component of the ER membrane protein complex (EMC). As to expression, abundant in heart muscle and kidney with lower levels in liver and brain and very little expression in intestine or colon. In kidney, highest levels in distal convoluted tubule.

It is found in the endoplasmic reticulum membrane. Its subcellular location is the golgi apparatus membrane. It localises to the early endosome membrane. Part of the endoplasmic reticulum membrane protein complex (EMC) that enables the energy-independent insertion into endoplasmic reticulum membranes of newly synthesized membrane proteins. Preferentially accommodates proteins with transmembrane domains that are weakly hydrophobic or contain destabilizing features such as charged and aromatic residues. Involved in the cotranslational insertion of multi-pass membrane proteins in which stop-transfer membrane-anchor sequences become ER membrane spanning helices. It is also required for the post-translational insertion of tail-anchored/TA proteins in endoplasmic reticulum membranes. By mediating the proper cotranslational insertion of N-terminal transmembrane domains in an N-exo topology, with translocated N-terminus in the lumen of the ER, controls the topology of multi-pass membrane proteins like the G protein-coupled receptors. By regulating the insertion of various proteins in membranes, it is indirectly involved in many cellular processes. May be involved Mg(2+) transport. The sequence is that of ER membrane protein complex subunit 5 from Mus musculus (Mouse).